The primary structure comprises 257 residues: AN1-type zinc finger protein 2B (257 aa).

AN1-type zinc fingers lie at residues 4-52 (PDLG…QKDI) and 94-142 (KIFT…HPTS). Cys10, Cys15, Cys25, Cys28, Cys33, His36, His42, Cys44, Cys100, Cys105, Cys115, Cys118, Cys123, His126, His132, and Cys134 together coordinate Zn(2+). The VCP/p97-interacting motif (VIM) stretch occupies residues 141 to 151 (TSRAGLAAISR). The tract at residues 153 to 187 (QGLASTSTVPSPSRTLPSSSSPSRATPQLPPRTTS) is disordered. A compositionally biased stretch (low complexity) spans 156–179 (ASTSTVPSPSRTLPSSSSPSRATP). 3 positions are modified to phosphoserine: Ser163, Ser173, and Ser187. 2 UIM domains span residues 197-216 (SEDEALQRALELSLAEAKPQ) and 221-240 (QEEEDLALAQALSASEAEYQ). Cys254 is subject to Cysteine methyl ester. A lipid anchor (S-geranylgeranyl cysteine) is attached at Cys254. The CAAX motif motif lies at 254–257 (CSLC). Positions 255–257 (SLC) are cleaved as a propeptide — removed in mature form.

In terms of assembly, binds 'Lys-48'-linked polyubiquitin chains of ubiquitinated proteins. Associates with the proteasome complex; upon exposure to arsenite. Interacts (via VIM motif) with VCP; the interaction is direct. Interacts with BAG6. Interacts with IGF1R (nascent precursor form). Interacts with DERL1, FAF2, NPLOC4 and UFD1; probably through VCP. Phosphorylated by MAPK14. Phosphorylation has no effect on association with the proteasome complex.

The protein localises to the endoplasmic reticulum membrane. Plays a role in protein homeostasis by regulating both the translocation and the ubiquitin-mediated proteasomal degradation of nascent proteins at the endoplasmic reticulum. It is involved in the regulation of signal-mediated translocation of proteins into the endoplasmic reticulum. It also plays a role in the ubiquitin-mediated proteasomal degradation of proteins for which signal-mediated translocation to the endoplasmic reticulum has failed. May therefore function in the endoplasmic reticulum stress-induced pre-emptive quality control, a mechanism that selectively attenuates the translocation of newly synthesized proteins into the endoplasmic reticulum and reroutes them to the cytosol for proteasomal degradation. By controlling the steady-state expression of the IGF1R receptor, indirectly regulates the insulin-like growth factor receptor signaling pathway. This Rattus norvegicus (Rat) protein is AN1-type zinc finger protein 2B.